The sequence spans 122 residues: Large ribosomal subunit protein uL14 (122 aa).

Belongs to the universal ribosomal protein uL14 family. As to quaternary structure, part of the 50S ribosomal subunit. Forms a cluster with proteins L3 and L19. In the 70S ribosome, L14 and L19 interact and together make contacts with the 16S rRNA in bridges B5 and B8.

In terms of biological role, binds to 23S rRNA. Forms part of two intersubunit bridges in the 70S ribosome. This is Large ribosomal subunit protein uL14 from Acinetobacter baumannii (strain SDF).